The chain runs to 130 residues: Small ribosomal subunit protein uS11 (130 aa).

It belongs to the universal ribosomal protein uS11 family. Part of the 30S ribosomal subunit. Interacts with proteins S7 and S18. Binds to IF-3.

In terms of biological role, located on the platform of the 30S subunit, it bridges several disparate RNA helices of the 16S rRNA. Forms part of the Shine-Dalgarno cleft in the 70S ribosome. In Rippkaea orientalis (strain PCC 8801 / RF-1) (Cyanothece sp. (strain PCC 8801)), this protein is Small ribosomal subunit protein uS11.